The chain runs to 198 residues: Glycerol-3-phosphate acyltransferase (198 aa).

The next 5 helical transmembrane spans lie at 2 to 22 (YAVLTAIIAYLIGCINNAYIF), 48 to 70 (LGYKAAAPVFALDVLKGVIAVLI), 75 to 97 (MGNTGAMIAGIAVVCGHNWPVFL), 111 to 131 (VVMTVSPLLGLIALAIGVTVI), and 154 to 174 (IFWNSTQIFIFSLILASLAIF).

It belongs to the PlsY family. Probably interacts with PlsX.

It is found in the cell membrane. It carries out the reaction an acyl phosphate + sn-glycerol 3-phosphate = a 1-acyl-sn-glycero-3-phosphate + phosphate. It functions in the pathway lipid metabolism; phospholipid metabolism. Its function is as follows. Catalyzes the transfer of an acyl group from acyl-phosphate (acyl-PO(4)) to glycerol-3-phosphate (G3P) to form lysophosphatidic acid (LPA). This enzyme utilizes acyl-phosphate as fatty acyl donor, but not acyl-CoA or acyl-ACP. This chain is Glycerol-3-phosphate acyltransferase, found in Thermoanaerobacter sp. (strain X514).